A 368-amino-acid polypeptide reads, in one-letter code: Glutamate 5-kinase (368 aa).

Lys-13 lines the ATP pocket. 3 residues coordinate substrate: Ser-54, Asp-141, and Asn-153. Residue Ser-173–Asp-174 coordinates ATP. In terms of domain architecture, PUA spans Lys-278–Pro-355.

This sequence belongs to the glutamate 5-kinase family.

The protein localises to the cytoplasm. The enzyme catalyses L-glutamate + ATP = L-glutamyl 5-phosphate + ADP. It functions in the pathway amino-acid biosynthesis; L-proline biosynthesis; L-glutamate 5-semialdehyde from L-glutamate: step 1/2. In terms of biological role, catalyzes the transfer of a phosphate group to glutamate to form L-glutamate 5-phosphate. This is Glutamate 5-kinase from Jannaschia sp. (strain CCS1).